The following is a 542-amino-acid chain: Prolyl 4-hydroxylase subunit alpha-3 (542 aa).

Residues 1–24 form the signal peptide; that stretch reads MGPGARLALLALLALGGDPAAATG. The stretch at 105 to 129 forms a coiled coil; the sequence is LEATENIRALKDGYEKVEQDLPAFE. A TPR repeat occupies 225–258; the sequence is EDALDYLAFACFQVGNVSCALSLSREFLVYSPDN. N-linked (GlcNAc...) asparagine glycosylation occurs at asparagine 240. In terms of domain architecture, Fe2OG dioxygenase spans 420–527; that stretch reads YAEYLQVVNY…KWVANKWIHE (108 aa). Fe cation is bound by residues histidine 438 and aspartate 440. Residue asparagine 480 is glycosylated (N-linked (GlcNAc...) asparagine). Residue histidine 508 participates in Fe cation binding. Lysine 518 serves as a coordination point for 2-oxoglutarate.

It belongs to the P4HA family. Heterotetramer of two alpha-3 chains and two beta chains (the beta chain is the multi-functional PDI). Requires Fe(2+) as cofactor. The cofactor is L-ascorbate. N-glycosylation plays no role in the catalytic activity.

Its subcellular location is the endoplasmic reticulum lumen. The catalysed reaction is L-prolyl-[collagen] + 2-oxoglutarate + O2 = trans-4-hydroxy-L-prolyl-[collagen] + succinate + CO2. Catalyzes the post-translational formation of 4-hydroxyproline in -Xaa-Pro-Gly- sequences in collagens and other proteins. In Mus musculus (Mouse), this protein is Prolyl 4-hydroxylase subunit alpha-3 (P4ha3).